We begin with the raw amino-acid sequence, 204 residues long: Cold and drought-regulated protein CORA (204 aa).

18 repeat units span residues 54–59, 65–70, 71–76, 78–83, 85–90, 98–100, 101–103, 112–114, 115–117, 126–128, 129–131, 164–169, 171–176, 178–180, 181–183, 184–186, 187–189, and 190–192. The tract at residues 54–176 is 7 X 6 AA repeats of Y-N-H-G-G-G; that stretch reads YNHGGGYNGG…GGGGYNHGGG (123 aa). Residues 98 to 192 form an 11 X 3 AA repeats of H-G-G region; the sequence is HGGHGGGGYN…GHGGHGGHGG (95 aa). Over residues 169 to 194 the composition is skewed to gly residues; that stretch reads GGYNHGGGGHGGHGGHGGHGGHGGHG. The segment at 169-204 is disordered; the sequence is GGYNHGGGGHGGHGGHGGHGGHGGHGAVQTEDNTQN.

Belongs to the GRP family.

In terms of biological role, may be involved in resistance of the plant to environmental stress. This is Cold and drought-regulated protein CORA (CORA) from Medicago sativa (Alfalfa).